The following is a 245-amino-acid chain: tRNA (guanine-N(1)-)-methyltransferase (245 aa).

Residues Gly-113 and 133-138 (IGDYVL) each bind S-adenosyl-L-methionine.

It belongs to the RNA methyltransferase TrmD family. Homodimer.

The protein resides in the cytoplasm. The enzyme catalyses guanosine(37) in tRNA + S-adenosyl-L-methionine = N(1)-methylguanosine(37) in tRNA + S-adenosyl-L-homocysteine + H(+). Specifically methylates guanosine-37 in various tRNAs. The sequence is that of tRNA (guanine-N(1)-)-methyltransferase from Histophilus somni (strain 129Pt) (Haemophilus somnus).